A 352-amino-acid polypeptide reads, in one-letter code: Phosphoribosylformylglycinamidine cyclo-ligase (352 aa).

It belongs to the AIR synthase family.

Its subcellular location is the cytoplasm. The enzyme catalyses 2-formamido-N(1)-(5-O-phospho-beta-D-ribosyl)acetamidine + ATP = 5-amino-1-(5-phospho-beta-D-ribosyl)imidazole + ADP + phosphate + H(+). It functions in the pathway purine metabolism; IMP biosynthesis via de novo pathway; 5-amino-1-(5-phospho-D-ribosyl)imidazole from N(2)-formyl-N(1)-(5-phospho-D-ribosyl)glycinamide: step 2/2. The sequence is that of Phosphoribosylformylglycinamidine cyclo-ligase from Pseudomonas entomophila (strain L48).